The sequence spans 139 residues: Putative pre-16S rRNA nuclease (139 aa).

It belongs to the YqgF nuclease family.

The protein resides in the cytoplasm. Could be a nuclease involved in processing of the 5'-end of pre-16S rRNA. This is Putative pre-16S rRNA nuclease from Streptococcus thermophilus (strain ATCC BAA-491 / LMD-9).